The following is a 932-amino-acid chain: Receptor-like protein 9a (932 aa).

A signal peptide spans 1-28 (MLIFTIPQFFFAAWVMVVSLQMQGYISC). The Extracellular segment spans residues 29–888 (IEKERKGLLE…DDETAIDMET (860 aa)). Residues asparagine 53, asparagine 80, and asparagine 90 are each glycosylated (N-linked (GlcNAc...) asparagine). LRR repeat units lie at residues 97-122 (FEEL…GYKS), 126-152 (LKKL…AASS), 154-174 (RTLI…ELKD), 175-200 (LSNL…VLHK), 202-222 (HALD…GLCQ), 223-246 (LKNL…CFSS), 247-273 (LTQL…NLDS), 275-295 (EYLS…LIAN), 296-320 (LSKL…ISLQ), 322-345 (KFRL…LQQQ), 346-368 (KDLR…WFLE), 370-393 (YPKL…RLLV), 394-417 (HSLH…IGHV), 418-441 (LPNI…SFSE), 443-466 (KKIF…FCIG), 468-491 (SSLS…PMKL), 492-514 (ESLR…LIHS), 516-535 (GLVF…PSWF), 536-560 (GGFY…TLFN), 561-583 (VSFQ…HFSF), 585-605 (HMGL…STLL), 606-629 (ENVM…VSNR), 631-652 (FLYL…LCEL), 653-676 (KSIR…LNNV), 745-769 (FKFM…LGDF), 770-792 (QRIR…SFSN), 794-817 (TDIE…LTKL), and 819-842 (YIVV…KFLS). N-linked (GlcNAc...) asparagine glycosylation occurs at asparagine 140. N-linked (GlcNAc...) asparagine glycans are attached at residues asparagine 261 and asparagine 295. Residues asparagine 352 and asparagine 380 are each glycosylated (N-linked (GlcNAc...) asparagine). N-linked (GlcNAc...) asparagine glycans are attached at residues asparagine 420, asparagine 425, and asparagine 454. N-linked (GlcNAc...) asparagine glycans are attached at residues asparagine 524, asparagine 551, and asparagine 560. N-linked (GlcNAc...) asparagine glycans are attached at residues asparagine 666 and asparagine 675. 2 N-linked (GlcNAc...) asparagine glycosylation sites follow: asparagine 776 and asparagine 792. Asparagine 824, asparagine 829, asparagine 860, and asparagine 866 each carry an N-linked (GlcNAc...) asparagine glycan. A helical transmembrane segment spans residues 889–909 (FYWSLFATYGITWMAFIVFLC). Topologically, residues 910-932 (FDSPWRQAWFRLVNVFVSFLKCV) are cytoplasmic.

It belongs to the RLP family.

It localises to the cell membrane. The sequence is that of Receptor-like protein 9a from Arabidopsis thaliana (Mouse-ear cress).